Consider the following 436-residue polypeptide: Cyclin-A2-2 (436 aa).

The protein belongs to the cyclin family. Cyclin AB subfamily. As to expression, expressed in roots, stems, leaves, flowers and siliques.

This Arabidopsis thaliana (Mouse-ear cress) protein is Cyclin-A2-2 (CYCA2-2).